The primary structure comprises 579 residues: Protein PLASTID MOVEMENT IMPAIRED 15 (579 aa).

Coiled coils occupy residues 90 to 161 (EVLK…NEEH), 188 to 216 (KVLD…IEIE), 383 to 419 (QKTK…KLES), and 481 to 501 (LMKT…EERE).

It belongs to the WEB family.

Its function is as follows. Required for the chloroplast avoidance response under high intensity blue light. This avoidance response consists in the relocation of chloroplasts on the anticlinal side of exposed cells. The sequence is that of Protein PLASTID MOVEMENT IMPAIRED 15 (PMI15) from Arabidopsis thaliana (Mouse-ear cress).